The chain runs to 397 residues: LIM/homeobox protein Lhx9 (397 aa).

The tract at residues 40–60 (RSKTESRLAKGGQMNGRETNM) is disordered. 2 LIM zinc-binding domains span residues 69-130 (ALCA…RFSV) and 131-193 (QRCA…LLQG). The segment at residues 267 to 326 (TKRMATSFKHHQLRTMKSYFAINHNPDAKDLKQLAQKTGLTKRVLQVWFQNARAKFRRNL) is a DNA-binding region (homeobox). Disordered regions lie at residues 330-363 (ENGG…TTLT) and 378-397 (SNLD…TNLF). The span at 353-363 (LTPPGTATTLT) shows a compositional bias: low complexity. Polar residues predominate over residues 387-397 (SPSQTTLTNLF).

It is found in the nucleus. Its function is as follows. May be involved in gonadal development. The protein is LIM/homeobox protein Lhx9 (LHX9) of Gallus gallus (Chicken).